Reading from the N-terminus, the 64-residue chain is DNA-directed RNA polymerase subunit Rpo10 (64 aa).

Residues Cys7, Cys10, Cys45, and Cys46 each contribute to the Zn(2+) site.

Belongs to the archaeal Rpo10/eukaryotic RPB10 RNA polymerase subunit family. Part of the RNA polymerase complex. It depends on Zn(2+) as a cofactor.

It localises to the cytoplasm. It carries out the reaction RNA(n) + a ribonucleoside 5'-triphosphate = RNA(n+1) + diphosphate. Functionally, DNA-dependent RNA polymerase (RNAP) catalyzes the transcription of DNA into RNA using the four ribonucleoside triphosphates as substrates. The protein is DNA-directed RNA polymerase subunit Rpo10 of Halorubrum lacusprofundi (strain ATCC 49239 / DSM 5036 / JCM 8891 / ACAM 34).